The sequence spans 569 residues: Lysine--tRNA ligase (569 aa).

2 residues coordinate Mg(2+): Glu414 and Glu421.

This sequence belongs to the class-II aminoacyl-tRNA synthetase family. Homodimer. The cofactor is Mg(2+).

Its subcellular location is the cytoplasm. It catalyses the reaction tRNA(Lys) + L-lysine + ATP = L-lysyl-tRNA(Lys) + AMP + diphosphate. This is Lysine--tRNA ligase from Christiangramia forsetii (strain DSM 17595 / CGMCC 1.15422 / KT0803) (Gramella forsetii).